A 196-amino-acid chain; its full sequence is Imidazoleglycerol-phosphate dehydratase (196 aa).

This sequence belongs to the imidazoleglycerol-phosphate dehydratase family.

It localises to the cytoplasm. It catalyses the reaction D-erythro-1-(imidazol-4-yl)glycerol 3-phosphate = 3-(imidazol-4-yl)-2-oxopropyl phosphate + H2O. It participates in amino-acid biosynthesis; L-histidine biosynthesis; L-histidine from 5-phospho-alpha-D-ribose 1-diphosphate: step 6/9. This Lachnoclostridium phytofermentans (strain ATCC 700394 / DSM 18823 / ISDg) (Clostridium phytofermentans) protein is Imidazoleglycerol-phosphate dehydratase.